The primary structure comprises 398 residues: Stomatin-like protein 1 (398 aa).

The Tyrosine-type lysosomal sorting signal signature appears at 6 to 10 (GYRAL). Residue serine 28 is modified to Phosphoserine. The chain crosses the membrane as a helical; Signal-anchor for type III membrane protein span at residues 58–78 (LISFLGFLLLLVTFPISGWFA). Residues 79–398 (LKIVPTYERM…KLEAVLRALK (320 aa)) lie on the Cytoplasmic side of the membrane. The SCP2 domain maps to 287–398 (KQPLAEGLLT…KLEAVLRALK (112 aa)).

Belongs to the band 7/mec-2 family. As to quaternary structure, interacts with STOM; may redistribute STOM from the plasma membrane to late endosomes. Interacts with FBXW7 isoform 3 and CDK2. As to expression, ubiquitously expressed at low levels. Expression is highest in brain.

It is found in the membrane. The protein resides in the late endosome membrane. It localises to the membrane raft. Its subcellular location is the cell membrane. The protein localises to the cytoplasmic vesicle. May play a role in cholesterol transfer to late endosomes. May play a role in modulating membrane acid-sensing ion channels. Can specifically inhibit proton-gated current of ASIC1 isoform 1. Can increase inactivation speed of ASIC3. May be involved in regulation of proton sensing in dorsal root ganglions. May play a role in protecting FBXW7 isoform 3 from degradation. The chain is Stomatin-like protein 1 (STOML1) from Homo sapiens (Human).